The sequence spans 1198 residues: Tetratricopeptide repeat protein 17 (1198 aa).

Residues 295-328 (FTSYYTLGNIYAMLGEYNHSVLCYDHALQAKPGF) form a TPR 1 repeat. The stretch at 340 to 382 (CQQKLEQKLEAQHRSLQRTLNELKEYQKQHDHYLRQQEILEKH) forms a coiled coil. 2 TPR repeats span residues 619–652 (WLIL…APVQ) and 689–722 (PLTF…STKC). Disordered stretches follow at residues 774–793 (LDAA…PVLS) and 902–954 (VKKP…YQSL). Residues 902-914 (VKKPKGDHKKPPG) show a composition bias toward basic residues. 3 TPR repeats span residues 1071–1105 (SWVL…APHQ), 1108–1141 (DVPL…APHF), and 1142–1175 (AVNH…QPEF).

Belongs to the TTC17 family. In terms of assembly, interacts with CATIP.

The protein localises to the cytoplasm. The protein resides in the cell membrane. It localises to the cytoskeleton. Plays a role in primary ciliogenesis by modulating actin polymerization. The chain is Tetratricopeptide repeat protein 17 (Ttc17) from Mus musculus (Mouse).